The sequence spans 241 residues: ATP synthase subunit a (241 aa).

A run of 5 helical transmembrane segments spans residues 30-50 (GQVF…VVVG), 91-111 (FIGT…LVPW), 128-148 (INTT…AGLS), 193-213 (LVVA…VMFL), and 214-234 (GLFT…YYIG).

Belongs to the ATPase A chain family. In terms of assembly, F-type ATPases have 2 components, CF(1) - the catalytic core - and CF(0) - the membrane proton channel. CF(1) has five subunits: alpha(3), beta(3), gamma(1), delta(1), epsilon(1). CF(0) has four main subunits: a, b, b' and c.

The protein localises to the cellular thylakoid membrane. In terms of biological role, key component of the proton channel; it plays a direct role in the translocation of protons across the membrane. The polypeptide is ATP synthase subunit a (Prochlorococcus marinus (strain MIT 9303)).